A 199-amino-acid polypeptide reads, in one-letter code: Pneumococcal vaccine antigen A homolog (199 aa).

It localises to the cell surface. This Streptococcus pyogenes serotype M18 (strain MGAS8232) protein is Pneumococcal vaccine antigen A homolog (pvaA).